The following is a 205-amino-acid chain: Large ribosomal subunit protein eL15 (205 aa).

2 disordered regions span residues 70 to 90 and 172 to 197; these read GRKRQVPGGRTGGKPKTHGVN and RGLRRKGTHRASKTRPSRQANYKRRN.

Belongs to the eukaryotic ribosomal protein eL15 family.

The sequence is that of Large ribosomal subunit protein eL15 (rpl15-1) from Dictyostelium discoideum (Social amoeba).